The sequence spans 485 residues: tRNA sulfurtransferase (485 aa).

Residues 63–167 (DKLVERLSCM…NELLYLVTAI (105 aa)) form the THUMP domain. ATP-binding positions include 185 to 186 (LI), K267, G289, and Q298. C346 and C458 form a disulfide bridge. The Rhodanese domain maps to 406-485 (LAENEVILDI…FNNIKVYRQN (80 aa)). The Cysteine persulfide intermediate role is filled by C458.

The protein belongs to the ThiI family.

It localises to the cytoplasm. It carries out the reaction [ThiI sulfur-carrier protein]-S-sulfanyl-L-cysteine + a uridine in tRNA + 2 reduced [2Fe-2S]-[ferredoxin] + ATP + H(+) = [ThiI sulfur-carrier protein]-L-cysteine + a 4-thiouridine in tRNA + 2 oxidized [2Fe-2S]-[ferredoxin] + AMP + diphosphate. The catalysed reaction is [ThiS sulfur-carrier protein]-C-terminal Gly-Gly-AMP + S-sulfanyl-L-cysteinyl-[cysteine desulfurase] + AH2 = [ThiS sulfur-carrier protein]-C-terminal-Gly-aminoethanethioate + L-cysteinyl-[cysteine desulfurase] + A + AMP + 2 H(+). It functions in the pathway cofactor biosynthesis; thiamine diphosphate biosynthesis. In terms of biological role, catalyzes the ATP-dependent transfer of a sulfur to tRNA to produce 4-thiouridine in position 8 of tRNAs, which functions as a near-UV photosensor. Also catalyzes the transfer of sulfur to the sulfur carrier protein ThiS, forming ThiS-thiocarboxylate. This is a step in the synthesis of thiazole, in the thiamine biosynthesis pathway. The sulfur is donated as persulfide by IscS. The sequence is that of tRNA sulfurtransferase from Tolumonas auensis (strain DSM 9187 / NBRC 110442 / TA 4).